Reading from the N-terminus, the 414-residue chain is MRKTIFAFLTGLMMFGTITAASASPDSKNQTAKKPKVQTGIDTLLPDYKKQLKGKRIGLITNPAGVNTSLKSSVDILYENPDIKLTALFGPEHGVRGDAQAGDEVGSYIDEKTGVPVYSLYGKTKKPTPEMLKNVDILMFDIQDVGTRFYTYIYTMAYAMEAAKENGIPFMVLDRPNPQGGNHIEGPILEPEYASFVGLYPIPLKHGMTIGELASLFNKEFSIDADLTVVKMKHWKRKMDFDDTRLPFVLPSPNMPTVESTFVYPATGLIEGTNISEGRGTTKPFELIGAPFIKSTELEETLNSLHLPGVTFRAASFTPTFSKHQGTLCHGVQLYVTDRDKFEAVKTGLSVIKTIHDLYPEDFEFLSTGSFDKLAGNGWIRTKIENGTSVENIINSYEKTLQQFSKTRKKYLIY.

The signal sequence occupies residues 1 to 23 (MRKTIFAFLTGLMMFGTITAASA).

Belongs to the glycoside hydrolase 171 family. In terms of assembly, homodimer in solution.

The protein resides in the secreted. The enzyme catalyses Hydrolysis of terminal, non-reducing N-acetylmuramic residues.. Functionally, catalyzes the exo-lytic cleavage of beta-1,4-N-acetylmuramate (beta-1,4-MurNAc) from the non-reducing ends of peptidoglycan chains. Specifically hydrolyzes the natural, peptidoglycan-derived disaccharide MurNAc-GlcNAc and the artificial substrate para-nitrophenyl beta-N-acetylmuramic acid (pNP-MurNAc). Requires a MurNAc entity at the non-reducing end, and cannot cleave GlcNAc-MurNAc. Probably plays a role in cell wall turnover and recycling. This chain is Peptidoglycan beta-N-acetylmuramidase NamZ, found in Bacillus subtilis (strain 168).